Reading from the N-terminus, the 255-residue chain is Uracil-DNA glycosylase (255 aa).

Catalysis depends on aspartate 90, which acts as the Proton acceptor.

It belongs to the uracil-DNA glycosylase (UDG) superfamily. UNG family.

The protein resides in the host nucleus. The catalysed reaction is Hydrolyzes single-stranded DNA or mismatched double-stranded DNA and polynucleotides, releasing free uracil.. Its function is as follows. Excises uracil residues from the DNA which can arise as a result of misincorporation of dUMP residues by DNA polymerase or deamination of cytosines. Therefore may reduce deleterious uracil incorporation into the viral genome, particularly in terminally differentiated cells which lack DNA repair enzymes. This chain is Uracil-DNA glycosylase, found in Equine herpesvirus 2 (strain 86/87) (EHV-2).